A 208-amino-acid chain; its full sequence is Protein IncB (208 aa).

In terms of biological role, this protein is thought to be cis acting and to contain the putative attachment site on the DNA for the cellular partition apparatus. The polypeptide is Protein IncB (incB) (Escherichia coli).